The following is a 378-amino-acid chain: REST corepressor 3 (378 aa).

The ELM2 domain occupies 1 to 83 (MRVGAEYQAR…KSLADLPNFT (83 aa)). The 52-residue stretch at 84–135 (PFPDEWTVEDKVLFEQAFSFHGKSFHRIQQMLPDKTIASLVKYYYSWKKTRS) folds into the SANT domain. The disordered stretch occupies residues 147–219 (LANRNNQGDS…SQRSKCRPPK (73 aa)). The segment covering 162–184 (EPHPMDGNDSDYDPKKEAKKEGN) has biased composition (basic and acidic residues). Over residues 205-217 (QHRHHSQRSKCRP) the composition is skewed to basic residues. Residues 238 to 273 (ANTILRRLDMELISLKRQVQNAKQVNSALKQKMEGG) adopt a coiled-coil conformation. The interval 337 to 356 (TASSTSCCSCSPPSASAAPT) is disordered.

Belongs to the CoREST family.

The protein resides in the nucleus. In terms of biological role, may act as a component of a corepressor complex that represses transcription. This chain is REST corepressor 3 (RCOR3), found in Gallus gallus (Chicken).